Consider the following 153-residue polypeptide: Aspartate carbamoyltransferase regulatory chain (153 aa).

Cysteine 109, cysteine 114, cysteine 138, and cysteine 141 together coordinate Zn(2+).

Belongs to the PyrI family. As to quaternary structure, contains catalytic and regulatory chains. Requires Zn(2+) as cofactor.

In terms of biological role, involved in allosteric regulation of aspartate carbamoyltransferase. This is Aspartate carbamoyltransferase regulatory chain from Shigella flexneri serotype 5b (strain 8401).